Consider the following 411-residue polypeptide: 2,3-bisphosphoglycerate-independent phosphoglycerate mutase (411 aa).

The protein belongs to the BPG-independent phosphoglycerate mutase family. A-PGAM subfamily.

It catalyses the reaction (2R)-2-phosphoglycerate = (2R)-3-phosphoglycerate. It participates in carbohydrate degradation; glycolysis; pyruvate from D-glyceraldehyde 3-phosphate: step 3/5. Catalyzes the interconversion of 2-phosphoglycerate and 3-phosphoglycerate. The polypeptide is 2,3-bisphosphoglycerate-independent phosphoglycerate mutase (Thermococcus gammatolerans (strain DSM 15229 / JCM 11827 / EJ3)).